Here is a 275-residue protein sequence, read N- to C-terminus: Elongation factor Ts (275 aa).

Residues 80 to 83 (TDFV) are involved in Mg(2+) ion dislocation from EF-Tu.

Belongs to the EF-Ts family.

It is found in the cytoplasm. Its function is as follows. Associates with the EF-Tu.GDP complex and induces the exchange of GDP to GTP. It remains bound to the aminoacyl-tRNA.EF-Tu.GTP complex up to the GTP hydrolysis stage on the ribosome. In Clavibacter sepedonicus (Clavibacter michiganensis subsp. sepedonicus), this protein is Elongation factor Ts.